A 134-amino-acid chain; its full sequence is Protein LctB (134 aa).

The protein is Protein LctB (lctB) of Bacillus caldotenax.